We begin with the raw amino-acid sequence, 334 residues long: MLYAKALSIGDEIGFFSPSSPATAFAPNRFQRAKAYLKAQGFELVEGSLTGKSDYYRSGSIRERAEELNQLIRDPNVRCIMPTIGGNNSNSLLPYIDYEALRNDPKIIIGYSDVTALLLGIYAQTGLITFYGPALVASFGEYPPLVDETFHSFIDLLCSETNQYQYTMPSSWTDIKHDWETQHSAKPVYPNEWQFIGKGKVTGRIIGGNLNTMAGIWGSRYMPEIKVGDILLIEDSLKGIENVERSFAHLAACGVFERVSAIILGKHELFDNKGTGRTPLDVLIEVLADKNVPIFYGFDSCHTHPMLVTPLGVRGTIDFDNHTFKLEDRWVKAK.

The active-site Nucleophile is serine 112. Residues glutamate 234 and histidine 302 each act as charge relay system in the active site.

It belongs to the peptidase S66 family.

In Vibrio cholerae serotype O1 (strain ATCC 39315 / El Tor Inaba N16961), this protein is Putative carboxypeptidase VC_A0337.